The sequence spans 212 residues: Prolactin-3C1 (212 aa).

A signal peptide spans 1-29 (MQLSLTQARTWKGLFLLVSCMFLWVYVTA). A disulfide bridge links Cys-80 with Cys-188. Asn-100 carries N-linked (GlcNAc...) asparagine glycosylation.

This sequence belongs to the somatotropin/prolactin family. In terms of tissue distribution, expressed exclusively in decidua.

The protein localises to the secreted. The sequence is that of Prolactin-3C1 (Prl3c1) from Mus musculus (Mouse).